The chain runs to 453 residues: MKLLVILLFSGLITGFRSDSSSSLPPKLLLVSFDGFRADYLKNYEFPHLQNFIKEGVLVEHVKNVFITKTFPNHYSIVTGLYEESHGIVANSMYDAVTKKHFSDSNDKDPFWWNEAVPIWVTNQLQENRSSAAAMWPGTDVPIHDTISSYFMNYNSSVSFEERLNNITMWLNNSNPPVTFATLYWEEPDASGHKYGPEDKENMSRVLKKIDDLIGDLVQRLKMLGLWENLNVIITSDHGMTQCSQDRLINLDSCIDHSYYTLIDLSPVAAILPKINRTEVYNKLKNCSPHMNVYLKEDIPNRFYYQHNDRIQPIILVADEGWTIVLNESSQKLGDHGYDNSLPSMHPFLAAHGPAFHKGYKHSTINIVDIYPMMCHILGLKPHPNNGTFGHTKCLLVDQWCINLPEAIAIVIGSLLVLTMLTCLIIIMQNRLSVPRPFSRLQLQEDDDDPLIG.

An N-terminal signal peptide occupies residues 1–15 (MKLLVILLFSGLITG). The Extracellular portion of the chain corresponds to 16 to 407 (FRSDSSSSLP…DQWCINLPEA (392 aa)). Zn(2+)-binding residues include Asp-34 and Thr-70. The active-site AMP-threonine intermediate is the Thr-70. Substrate contacts are provided by Asn-91 and Tyr-154. Asn-155 and Asn-166 each carry an N-linked (GlcNAc...) asparagine glycan. Positions 189, 193, 237, and 238 each coordinate Zn(2+). Residue Asp-189 participates in substrate binding. A disulfide bond links Cys-254 and Cys-287. A glycan (N-linked (GlcNAc...) asparagine) is linked at Asn-276. Zn(2+) is bound at residue His-336. An N-linked (GlcNAc...) asparagine glycan is attached at Asn-386. The cysteines at positions 394 and 401 are disulfide-linked. Residues 408 to 428 (IAIVIGSLLVLTMLTCLIIIM) form a helical membrane-spanning segment. At 429–453 (QNRLSVPRPFSRLQLQEDDDDPLIG) the chain is on the cytoplasmic side.

This sequence belongs to the nucleotide pyrophosphatase/phosphodiesterase family. The cofactor is Zn(2+). Expressed on the surface of vascular endothelia.

It is found in the cell membrane. The enzyme catalyses P(1),P(3)-bis(5'-adenosyl) triphosphate + H2O = AMP + ADP + 2 H(+). Hydrolyzes extracellular Ap3A into AMP and ADP, and Ap4A into AMP and ATP. Ap3A and Ap4A are diadenosine polyphosphates thought to induce proliferation of vascular smooth muscle cells. Acts as a procoagulant, mediating platelet aggregation at the site of nascent thrombus via release of ADP from Ap3A and activation of ADP receptors. The sequence is that of Bis(5'-adenosyl)-triphosphatase ENPP4 (ENPP4) from Homo sapiens (Human).